The following is a 422-amino-acid chain: Glutamyl-tRNA reductase (422 aa).

Substrate is bound by residues 49–52 (TCNR), Ser107, 112–114 (EPQ), and Gln118. The active-site Nucleophile is the Cys50. 187 to 192 (GAGETI) is a binding site for NADP(+).

Belongs to the glutamyl-tRNA reductase family. Homodimer.

It catalyses the reaction (S)-4-amino-5-oxopentanoate + tRNA(Glu) + NADP(+) = L-glutamyl-tRNA(Glu) + NADPH + H(+). The protein operates within porphyrin-containing compound metabolism; protoporphyrin-IX biosynthesis; 5-aminolevulinate from L-glutamyl-tRNA(Glu): step 1/2. Functionally, catalyzes the NADPH-dependent reduction of glutamyl-tRNA(Glu) to glutamate 1-semialdehyde (GSA). In Stutzerimonas stutzeri (strain A1501) (Pseudomonas stutzeri), this protein is Glutamyl-tRNA reductase.